The following is a 71-amino-acid chain: Small ribosomal subunit protein bS21 (71 aa).

This sequence belongs to the bacterial ribosomal protein bS21 family.

This chain is Small ribosomal subunit protein bS21, found in Blochmanniella floridana.